A 547-amino-acid chain; its full sequence is (R)-citramalate synthase (547 aa).

Positions 8–278 (LWLYDTTLRD…YDCIEPEKLA (271 aa)) constitute a Pyruvate carboxyltransferase domain.

Belongs to the alpha-IPM synthase/homocitrate synthase family.

It catalyses the reaction pyruvate + acetyl-CoA + H2O = (3R)-citramalate + CoA + H(+). It participates in amino-acid biosynthesis; L-isoleucine biosynthesis; 2-oxobutanoate from pyruvate: step 1/3. In terms of biological role, catalyzes the condensation of pyruvate and acetyl-coenzyme A to form (R)-citramalate. In Synechocystis sp. (strain ATCC 27184 / PCC 6803 / Kazusa), this protein is (R)-citramalate synthase.